The following is a 96-amino-acid chain: MLFYSFFKTLIDTEVTVELKNDMSIRGILKSVDQFLNVKLENISVVDASKYPHMAAVKDLFIRGSVVRYVHMSSAYVDTILLADACRRDLANNKRQ.

Residues 2 to 76 (LFYSFFKTLI…VRYVHMSSAY (75 aa)) form the Sm domain.

This sequence belongs to the snRNP Sm proteins family. Component of the heptameric LSM1-LSM7 complex that forms a seven-membered ring structure with a donut shape. The LSm subunits are arranged in the order lsm1, lsm2, lsm3, lsm6, lsm5, lsm7 and lsm4. Component of the heptameric LSM2-LSM8 complex that forms a seven-membered ring structure with a donut shape. The LSm subunits are arranged in the order lsm8, lsm2, lsm3, lsm6, lsm5, lsm7 and lsm4.

It is found in the nucleus. It localises to the cytoplasm. Functionally, component of LSm protein complexes, which are involved in RNA processing and may function in a chaperone-like manner. Component of the cytoplasmic LSM1-LSM7 complex which is involved in mRNA degradation by activating the decapping step. The LSM1-LSM7 complex loads onto the 3'-end of single stranded RNA. Component of the nuclear LSM2-LSM8 complex, which is involved in spliceosome assembly. The LSM2-LSM8 complex plays a role in the biogenesis of the spliceosomal U4/U6-U5 tri-snRNP complex by accelerating prp24-mediated annealing of U4/U6 di-snRNA. The LSM2-LSM8 complex binds U6 snRNA terminating with a cyclic 2',3' phosphate group; RNA with an unmodified 3' hydroxyl or non-cyclic 3' phosphate is bound less tightly. The chain is LSM complex subunit lsm2 (lsm2) from Schizosaccharomyces pombe (strain 972 / ATCC 24843) (Fission yeast).